Consider the following 171-residue polypeptide: MMKIVIYHSNECDPKRCTSIKLQKQNKVAITHNMRKIPYNAIVLDAEADKAVSREDREKITKYGLSALDCSWKKLKKSSFNFKSKKNHRLLPFLVAANPVNYGKPCILSSAEALSAALYIVGYKDEARDLMNSFKWGPHFITLNENLLEAYSEAKNSTEIVEVQNEFLGGK.

Residues T18, L68, L91, and S110 each coordinate S-adenosyl-L-methionine.

It belongs to the TDD superfamily. TSR3 family.

It localises to the cytoplasm. The enzyme catalyses an N(1)-methylpseudouridine in rRNA + S-adenosyl-L-methionine = N(1)-methyl-N(3)-[(3S)-3-amino-3-carboxypropyl]pseudouridine in rRNA + S-methyl-5'-thioadenosine + H(+). In terms of biological role, aminocarboxypropyltransferase that catalyzes the aminocarboxypropyl transfer on pseudouridine corresponding to position 914 in M.jannaschii 16S rRNA. It constitutes the last step in biosynthesis of the hypermodified N1-methyl-N3-(3-amino-3-carboxypropyl) pseudouridine (m1acp3-Psi). The protein is 16S rRNA aminocarboxypropyltransferase of Methanosphaera stadtmanae (strain ATCC 43021 / DSM 3091 / JCM 11832 / MCB-3).